Consider the following 301-residue polypeptide: D-alanine--D-alanine ligase (301 aa).

One can recognise an ATP-grasp domain in the interval 99–294; it reads KCILKAANIR…FSELIDMIID (196 aa). ATP is bound at residue 126–181; that stretch reads IEGMGYPVVVKPTHGGSSVATFIIKEEKDIKNAVTEAFKWDSEVIIEKFIKGDEIT. Residues Asp-248, Glu-261, and Asn-263 each contribute to the Mg(2+) site.

This sequence belongs to the D-alanine--D-alanine ligase family. Mg(2+) is required as a cofactor. Requires Mn(2+) as cofactor.

It is found in the cytoplasm. The enzyme catalyses 2 D-alanine + ATP = D-alanyl-D-alanine + ADP + phosphate + H(+). The protein operates within cell wall biogenesis; peptidoglycan biosynthesis. Functionally, cell wall formation. The protein is D-alanine--D-alanine ligase of Clostridium botulinum (strain Eklund 17B / Type B).